The primary structure comprises 203 residues: Guanylate kinase (203 aa).

A Guanylate kinase-like domain is found at 5–184; the sequence is GMLIVLSGPS…AVQRIEKIIE (180 aa). 12–19 contributes to the ATP binding site; sequence GPSGVGKG.

It belongs to the guanylate kinase family.

It localises to the cytoplasm. The enzyme catalyses GMP + ATP = GDP + ADP. Its function is as follows. Essential for recycling GMP and indirectly, cGMP. In Latilactobacillus sakei subsp. sakei (strain 23K) (Lactobacillus sakei subsp. sakei), this protein is Guanylate kinase.